The primary structure comprises 334 residues: Glyceraldehyde-3-phosphate dehydrogenase (334 aa).

NAD(+) contacts are provided by residues 11–12 (RI), D33, and S119. Residues 149–151 (SCT) and T180 contribute to the D-glyceraldehyde 3-phosphate site. Catalysis depends on C150, which acts as the Nucleophile. N181 is a binding site for NAD(+). Residues R197, 210 to 211 (TG), and R233 contribute to the D-glyceraldehyde 3-phosphate site. Position 314 (N314) interacts with NAD(+).

This sequence belongs to the glyceraldehyde-3-phosphate dehydrogenase family. Homotetramer.

The protein localises to the cytoplasm. The enzyme catalyses D-glyceraldehyde 3-phosphate + phosphate + NAD(+) = (2R)-3-phospho-glyceroyl phosphate + NADH + H(+). It participates in carbohydrate degradation; glycolysis; pyruvate from D-glyceraldehyde 3-phosphate: step 1/5. Its function is as follows. Catalyzes the oxidative phosphorylation of glyceraldehyde 3-phosphate (G3P) to 1,3-bisphosphoglycerate (BPG) using the cofactor NAD. The first reaction step involves the formation of a hemiacetal intermediate between G3P and a cysteine residue, and this hemiacetal intermediate is then oxidized to a thioester, with concomitant reduction of NAD to NADH. The reduced NADH is then exchanged with the second NAD, and the thioester is attacked by a nucleophilic inorganic phosphate to produce BPG. The chain is Glyceraldehyde-3-phosphate dehydrogenase (gap) from Clostridium acetobutylicum (strain ATCC 824 / DSM 792 / JCM 1419 / IAM 19013 / LMG 5710 / NBRC 13948 / NRRL B-527 / VKM B-1787 / 2291 / W).